The chain runs to 398 residues: Serine/threonine-protein kinase ppk23 (398 aa).

The 286-residue stretch at 74-359 (YEILEKIEEG…AKEALEHPYF (286 aa)) folds into the Protein kinase domain. Residues 80 to 88 (IEEGSYGIV) and K103 each bind ATP. The Proton acceptor role is filled by D198. Residues 359–398 (FYESPRPKDPKFFPTFPSKAKGESKEKNVFQSFRSASPKK) are disordered. Over residues 387-398 (VFQSFRSASPKK) the composition is skewed to polar residues.

Belongs to the protein kinase superfamily. Ser/Thr protein kinase family.

Its subcellular location is the nucleus. It catalyses the reaction L-seryl-[protein] + ATP = O-phospho-L-seryl-[protein] + ADP + H(+). The catalysed reaction is L-threonyl-[protein] + ATP = O-phospho-L-threonyl-[protein] + ADP + H(+). This is Serine/threonine-protein kinase ppk23 (ppk23) from Schizosaccharomyces pombe (strain 972 / ATCC 24843) (Fission yeast).